The chain runs to 188 residues: Elongation factor P (188 aa).

This sequence belongs to the elongation factor P family.

It is found in the cytoplasm. The protein operates within protein biosynthesis; polypeptide chain elongation. Functionally, involved in peptide bond synthesis. Stimulates efficient translation and peptide-bond synthesis on native or reconstituted 70S ribosomes in vitro. Probably functions indirectly by altering the affinity of the ribosome for aminoacyl-tRNA, thus increasing their reactivity as acceptors for peptidyl transferase. The chain is Elongation factor P from Bifidobacterium longum (strain DJO10A).